Here is a 337-residue protein sequence, read N- to C-terminus: Probable RuBisCO transcriptional regulator (337 aa).

Residues F6–T63 form the HTH lysR-type domain. The H-T-H motif DNA-binding region spans F23–Q42.

This sequence belongs to the LysR transcriptional regulatory family.

Trans-acting transcriptional regulator of RuBisCO genes (rbcL and rbcS) expression. The sequence is that of Probable RuBisCO transcriptional regulator (rbcR) from Trichormus variabilis (strain ATCC 29413 / PCC 7937) (Anabaena variabilis).